Here is a 145-residue protein sequence, read N- to C-terminus: Large ribosomal subunit protein bL9 (145 aa).

This sequence belongs to the bacterial ribosomal protein bL9 family.

Its function is as follows. Binds to the 23S rRNA. The polypeptide is Large ribosomal subunit protein bL9 (Ureaplasma parvum serovar 3 (strain ATCC 700970)).